A 183-amino-acid chain; its full sequence is Oligoribonuclease (183 aa).

In terms of domain architecture, Exonuclease spans 9 to 172 (LIWIDLEMTG…DDIRESIEEL (164 aa)). Tyr130 is a catalytic residue.

Belongs to the oligoribonuclease family.

It is found in the cytoplasm. Its function is as follows. 3'-to-5' exoribonuclease specific for small oligoribonucleotides. The polypeptide is Oligoribonuclease (Haemophilus ducreyi (strain 35000HP / ATCC 700724)).